A 198-amino-acid chain; its full sequence is Ribonuclease HII (198 aa).

Residues Q10–S198 form the RNase H type-2 domain. Residues D16, E17, and D108 each contribute to the a divalent metal cation site.

The protein belongs to the RNase HII family. It depends on Mn(2+) as a cofactor. Requires Mg(2+) as cofactor.

Its subcellular location is the cytoplasm. It carries out the reaction Endonucleolytic cleavage to 5'-phosphomonoester.. In terms of biological role, endonuclease that specifically degrades the RNA of RNA-DNA hybrids. In Shigella boydii serotype 18 (strain CDC 3083-94 / BS512), this protein is Ribonuclease HII.